The primary structure comprises 684 residues: Glycine--tRNA ligase beta subunit (684 aa).

The protein belongs to the class-II aminoacyl-tRNA synthetase family. In terms of assembly, tetramer of two alpha and two beta subunits.

Its subcellular location is the cytoplasm. The enzyme catalyses tRNA(Gly) + glycine + ATP = glycyl-tRNA(Gly) + AMP + diphosphate. The chain is Glycine--tRNA ligase beta subunit from Pseudomonas aeruginosa (strain ATCC 15692 / DSM 22644 / CIP 104116 / JCM 14847 / LMG 12228 / 1C / PRS 101 / PAO1).